A 612-amino-acid polypeptide reads, in one-letter code: tRNA uridine 5-carboxymethylaminomethyl modification enzyme MnmG (612 aa).

Residue 9 to 14 participates in FAD binding; the sequence is GAGHAG. 270 to 284 serves as a coordination point for NAD(+); that stretch reads GPLYCPSIEDKVFKF.

Belongs to the MnmG family. In terms of assembly, homodimer. Heterotetramer of two MnmE and two MnmG subunits. FAD is required as a cofactor.

It is found in the cytoplasm. In terms of biological role, NAD-binding protein involved in the addition of a carboxymethylaminomethyl (cmnm) group at the wobble position (U34) of certain tRNAs, forming tRNA-cmnm(5)s(2)U34. This chain is tRNA uridine 5-carboxymethylaminomethyl modification enzyme MnmG, found in Mycoplasma genitalium (strain ATCC 33530 / DSM 19775 / NCTC 10195 / G37) (Mycoplasmoides genitalium).